Consider the following 148-residue polypeptide: Snaclec 3 (148 aa).

The signal sequence occupies residues 1 to 23; sequence WGDSSSSASACWSCSSPLSGTEA. 3 cysteine pairs are disulfide-bonded: Cys27–Cys38, Cys55–Cys144, and Cys121–Cys136. The region spanning 34 to 145 is the C-type lectin domain; sequence YDQNCYKAFE…CSGTHSFVCK (112 aa).

The protein belongs to the snaclec family. Heterodimer; disulfide-linked. Expressed by the venom gland.

It is found in the secreted. Functionally, interferes with one step of hemostasis (modulation of platelet aggregation, or coagulation cascade, for example). The protein is Snaclec 3 of Echis carinatus sochureki (Saw-scaled viper).